The chain runs to 76 residues: MLILSRKVNEGIVIDDNIHIKVISIDRGSVRLGFEAPESTLILRAELKEAIVSENQKASASVDESLLENIKKVIKP.

It belongs to the CsrA/RsmA family. As to quaternary structure, homodimer; the beta-strands of each monomer intercalate to form a hydrophobic core, while the alpha-helices form wings that extend away from the core.

The protein localises to the cytoplasm. Functionally, a translational regulator that binds mRNA to regulate translation initiation and/or mRNA stability. Usually binds in the 5'-UTR at or near the Shine-Dalgarno sequence preventing ribosome-binding, thus repressing translation. Its main target seems to be the major flagellin gene, while its function is anatagonized by FliW. The chain is Translational regulator CsrA from Helicobacter pylori (strain P12).